The chain runs to 134 residues: Small ribosomal subunit protein uS11 (134 aa).

Disordered stretches follow at residues 1–22 (MPPKGRQGAAKKVRRKEKKNVA) and 114–134 (SIQDVTPTPHNGCRPPKRRRV). A compositionally biased stretch (basic residues) spans 9 to 22 (AAKKVRRKEKKNVA).

It belongs to the universal ribosomal protein uS11 family. In terms of assembly, part of the 30S ribosomal subunit. Interacts with proteins S7 and S18. Binds to IF-3.

Its function is as follows. Located on the platform of the 30S subunit, it bridges several disparate RNA helices of the 16S rRNA. Forms part of the Shine-Dalgarno cleft in the 70S ribosome. This is Small ribosomal subunit protein uS11 from Streptomyces avermitilis (strain ATCC 31267 / DSM 46492 / JCM 5070 / NBRC 14893 / NCIMB 12804 / NRRL 8165 / MA-4680).